The primary structure comprises 256 residues: Large ribosomal subunit protein eL8B (256 aa).

The disordered stretch occupies residues 1 to 37 (MAPGKKVAPAPFGAKSTKSNKAKNPLTHSTPKNFGIG).

It belongs to the eukaryotic ribosomal protein eL8 family. As to quaternary structure, component of the large ribosomal subunit (LSU). Mature yeast ribosomes consist of a small (40S) and a large (60S) subunit. The 40S small subunit contains 1 molecule of ribosomal RNA (18S rRNA) and 33 different proteins (encoded by 57 genes). The large 60S subunit contains 3 rRNA molecules (25S, 5.8S and 5S rRNA) and 46 different proteins (encoded by 81 genes).

It is found in the cytoplasm. Component of the ribosome, a large ribonucleoprotein complex responsible for the synthesis of proteins in the cell. The small ribosomal subunit (SSU) binds messenger RNAs (mRNAs) and translates the encoded message by selecting cognate aminoacyl-transfer RNA (tRNA) molecules. The large subunit (LSU) contains the ribosomal catalytic site termed the peptidyl transferase center (PTC), which catalyzes the formation of peptide bonds, thereby polymerizing the amino acids delivered by tRNAs into a polypeptide chain. The nascent polypeptides leave the ribosome through a tunnel in the LSU and interact with protein factors that function in enzymatic processing, targeting, and the membrane insertion of nascent chains at the exit of the ribosomal tunnel. This Saccharomyces cerevisiae (strain ATCC 204508 / S288c) (Baker's yeast) protein is Large ribosomal subunit protein eL8B.